The primary structure comprises 452 residues: Bifunctional protein GlmU (452 aa).

Residues 1-218 form a pyrophosphorylase region; the sequence is MKVLILAAGL…IVEVSGVNDR (218 aa). UDP-N-acetyl-alpha-D-glucosamine is bound by residues 6–9, Lys-20, Gln-68, 73–74, 95–97, Gly-134, Glu-147, Asn-162, and Asn-216; these read LAAG, GT, and YGD. Asp-97 serves as a coordination point for Mg(2+). Asn-216 contributes to the Mg(2+) binding site. Residues 219 to 239 form a linker region; that stretch reads IQLAQLETIAKQRILEKLMLS. The segment at 240–452 is N-acetyltransferase; the sequence is GVTIVDPNST…EELKNADHKE (213 aa). 2 residues coordinate UDP-N-acetyl-alpha-D-glucosamine: Arg-321 and Lys-339. His-351 serves as the catalytic Proton acceptor. Residues Tyr-354 and Asn-365 each contribute to the UDP-N-acetyl-alpha-D-glucosamine site. Residues Ala-368, 374-375, Ser-393, Ala-411, and Arg-428 contribute to the acetyl-CoA site; that span reads NY.

This sequence in the N-terminal section; belongs to the N-acetylglucosamine-1-phosphate uridyltransferase family. In the C-terminal section; belongs to the transferase hexapeptide repeat family. In terms of assembly, homotrimer. Mg(2+) is required as a cofactor.

The protein resides in the cytoplasm. It carries out the reaction alpha-D-glucosamine 1-phosphate + acetyl-CoA = N-acetyl-alpha-D-glucosamine 1-phosphate + CoA + H(+). The catalysed reaction is N-acetyl-alpha-D-glucosamine 1-phosphate + UTP + H(+) = UDP-N-acetyl-alpha-D-glucosamine + diphosphate. It participates in nucleotide-sugar biosynthesis; UDP-N-acetyl-alpha-D-glucosamine biosynthesis; N-acetyl-alpha-D-glucosamine 1-phosphate from alpha-D-glucosamine 6-phosphate (route II): step 2/2. Its pathway is nucleotide-sugar biosynthesis; UDP-N-acetyl-alpha-D-glucosamine biosynthesis; UDP-N-acetyl-alpha-D-glucosamine from N-acetyl-alpha-D-glucosamine 1-phosphate: step 1/1. It functions in the pathway bacterial outer membrane biogenesis; LPS lipid A biosynthesis. In terms of biological role, catalyzes the last two sequential reactions in the de novo biosynthetic pathway for UDP-N-acetylglucosamine (UDP-GlcNAc). The C-terminal domain catalyzes the transfer of acetyl group from acetyl coenzyme A to glucosamine-1-phosphate (GlcN-1-P) to produce N-acetylglucosamine-1-phosphate (GlcNAc-1-P), which is converted into UDP-GlcNAc by the transfer of uridine 5-monophosphate (from uridine 5-triphosphate), a reaction catalyzed by the N-terminal domain. The chain is Bifunctional protein GlmU from Fervidobacterium nodosum (strain ATCC 35602 / DSM 5306 / Rt17-B1).